Reading from the N-terminus, the 139-residue chain is Type II methyltransferase M.AquIB (139 aa).

Residues 1–135 (MDIKNVHIKN…KAVSEQLLDV (135 aa)) enclose the SAM-dependent MTase C5-type domain. Residues 38–58 (KTFGSTYRRLDPNQPSPTVTR) are disordered.

It belongs to the class I-like SAM-binding methyltransferase superfamily. C5-methyltransferase family. Heterodimer of an alpha and a beta subunit.

The catalysed reaction is a 2'-deoxycytidine in DNA + S-adenosyl-L-methionine = a 5-methyl-2'-deoxycytidine in DNA + S-adenosyl-L-homocysteine + H(+). Its function is as follows. A methylase, recognizes the double-stranded sequence 5'-CYCGRG-3', methylates C-1 on both strands, and protects the DNA from cleavage by the AquI endonuclease. In Picosynechococcus sp. (strain ATCC 27264 / PCC 7002 / PR-6) (Agmenellum quadruplicatum), this protein is Type II methyltransferase M.AquIB (aquIMB).